The sequence spans 330 residues: Glycerol-3-phosphate dehydrogenase [NAD(P)+] (330 aa).

The NADPH site is built by Ser11, Phe12, Arg32, and Lys106. Lys106, Gly133, and Ser135 together coordinate sn-glycerol 3-phosphate. NADPH is bound at residue Ala137. The sn-glycerol 3-phosphate site is built by Lys188, Asp241, Ser251, Arg252, and Asn253. Lys188 (proton acceptor) is an active-site residue. Arg252 serves as a coordination point for NADPH. NADPH contacts are provided by Val276 and Glu278.

Belongs to the NAD-dependent glycerol-3-phosphate dehydrogenase family.

Its subcellular location is the cytoplasm. It carries out the reaction sn-glycerol 3-phosphate + NAD(+) = dihydroxyacetone phosphate + NADH + H(+). It catalyses the reaction sn-glycerol 3-phosphate + NADP(+) = dihydroxyacetone phosphate + NADPH + H(+). Its pathway is membrane lipid metabolism; glycerophospholipid metabolism. Catalyzes the reduction of the glycolytic intermediate dihydroxyacetone phosphate (DHAP) to sn-glycerol 3-phosphate (G3P), the key precursor for phospholipid synthesis. The chain is Glycerol-3-phosphate dehydrogenase [NAD(P)+] from Clostridium botulinum (strain Alaska E43 / Type E3).